A 512-amino-acid chain; its full sequence is Maturase K (512 aa).

The protein belongs to the intron maturase 2 family. MatK subfamily.

It localises to the plastid. The protein resides in the chloroplast. Functionally, usually encoded in the trnK tRNA gene intron. Probably assists in splicing its own and other chloroplast group II introns. This is Maturase K from Oenothera biennis (German evening primrose).